Here is a 90-residue protein sequence, read N- to C-terminus: Probable Fe(2+)-trafficking protein (90 aa).

This sequence belongs to the Fe(2+)-trafficking protein family.

Functionally, could be a mediator in iron transactions between iron acquisition and iron-requiring processes, such as synthesis and/or repair of Fe-S clusters in biosynthetic enzymes. This is Probable Fe(2+)-trafficking protein from Idiomarina loihiensis (strain ATCC BAA-735 / DSM 15497 / L2-TR).